Here is a 108-residue protein sequence, read N- to C-terminus: Phosphoribosyl-ATP pyrophosphatase (108 aa).

It belongs to the PRA-PH family.

It is found in the cytoplasm. The enzyme catalyses 1-(5-phospho-beta-D-ribosyl)-ATP + H2O = 1-(5-phospho-beta-D-ribosyl)-5'-AMP + diphosphate + H(+). It functions in the pathway amino-acid biosynthesis; L-histidine biosynthesis; L-histidine from 5-phospho-alpha-D-ribose 1-diphosphate: step 2/9. This chain is Phosphoribosyl-ATP pyrophosphatase, found in Chromobacterium violaceum (strain ATCC 12472 / DSM 30191 / JCM 1249 / CCUG 213 / NBRC 12614 / NCIMB 9131 / NCTC 9757 / MK).